A 181-amino-acid chain; its full sequence is Oligoribonuclease (181 aa).

Positions 8–171 (LIWIDLEMTG…DDIRESVAEL (164 aa)) constitute an Exonuclease domain. Tyrosine 129 is a catalytic residue.

The protein belongs to the oligoribonuclease family.

The protein resides in the cytoplasm. 3'-to-5' exoribonuclease specific for small oligoribonucleotides. The polypeptide is Oligoribonuclease (Photorhabdus laumondii subsp. laumondii (strain DSM 15139 / CIP 105565 / TT01) (Photorhabdus luminescens subsp. laumondii)).